A 71-amino-acid chain; its full sequence is Translation initiation factor IF-1 (71 aa).

Residues 1–71 enclose the S1-like domain; it reads MKEKNIEMQG…SKGRIIFRSR (71 aa).

Belongs to the IF-1 family. In terms of assembly, component of the 30S ribosomal translation pre-initiation complex which assembles on the 30S ribosome in the order IF-2 and IF-3, IF-1 and N-formylmethionyl-tRNA(fMet); mRNA recruitment can occur at any time during PIC assembly.

The protein resides in the cytoplasm. Its function is as follows. One of the essential components for the initiation of protein synthesis. Stabilizes the binding of IF-2 and IF-3 on the 30S subunit to which N-formylmethionyl-tRNA(fMet) subsequently binds. Helps modulate mRNA selection, yielding the 30S pre-initiation complex (PIC). Upon addition of the 50S ribosomal subunit IF-1, IF-2 and IF-3 are released leaving the mature 70S translation initiation complex. The polypeptide is Translation initiation factor IF-1 (Buchnera aphidicola subsp. Cinara cedri (strain Cc)).